A 609-amino-acid chain; its full sequence is UvrABC system protein C (609 aa).

A GIY-YIG domain is found at 16-94 (SSAGVYRMYD…IKQYMPKYNV (79 aa)). The region spanning 203 to 238 (KQVISELVAKMEEAAEQQAYEQAARFRDQIMALRRV) is the UVR domain.

Belongs to the UvrC family. Interacts with UvrB in an incision complex.

The protein localises to the cytoplasm. In terms of biological role, the UvrABC repair system catalyzes the recognition and processing of DNA lesions. UvrC both incises the 5' and 3' sides of the lesion. The N-terminal half is responsible for the 3' incision and the C-terminal half is responsible for the 5' incision. This chain is UvrABC system protein C, found in Shewanella sp. (strain MR-4).